The following is a 525-amino-acid chain: Vesicular inhibitory amino acid transporter (525 aa).

The Cytoplasmic segment spans residues 1-132 (MATLLRSKLS…WNVTNAIQGM (132 aa)). The segment at 69–111 (PCGDEGAEPPVEGDIHYQRGSGAPLPPSGSKDQVGAGGEFGGH) is disordered. The helical transmembrane segment at 133-153 (FVLGLPYAILHGGYLGLFLII) threads the bilayer. Residues 154-204 (FAAVVCCYTGKILIACLYEENEDGEVVRVRDSYVAIANACCAPRFPTLGGR) are Lumenal, vesicle-facing. Tyrosine 186 is modified (3'-nitrotyrosine). The helical transmembrane segment at 205-225 (VVNVAQIIELVMTCILYVVVS) threads the bilayer. Residues 226-265 (GNLMYNSFPGLPVSQKSWSIIATAVLLPCAFLKNLKAVSK) lie on the Cytoplasmic side of the membrane. Residues 266–286 (FSLLCTLAHFVINILVIAYCL) form a helical membrane-spanning segment. Topologically, residues 287–305 (SRARDWAWEKVKFYIDVKK) are lumenal, vesicle. A helical transmembrane segment spans residues 306-326 (FPISIGIIVFSYTSQIFLPSL). Residues 327–341 (EGNMQQPSEFHCMMN) lie on the Cytoplasmic side of the membrane. Residues 342–362 (WTHIAACVLKGLFALVAYLTW) form a helical membrane-spanning segment. Residues 363 to 383 (ADETKEVITDNLPGSIRAVVN) lie on the Lumenal, vesicle side of the membrane. A helical membrane pass occupies residues 384–404 (IFLVAKALLSYPLPFFAAVEV). At 405-438 (LEKSLFQEGSRAFFPACYGGDGRLKSWGLTLRCA) the chain is on the cytoplasmic side. The chain crosses the membrane as a helical span at residues 439-459 (LVVFTLLMAIYVPHFALLMGL). The Lumenal, vesicle segment spans residues 460-461 (TG). Residues 462-482 (SLTGAGLCFLLPSLFHLRLLW) form a helical membrane-spanning segment. Residues 483–489 (RKLLWHQ) are Cytoplasmic-facing. Residues 490-510 (VFFDVAIFVIGGICSVSGFVH) traverse the membrane as a helical segment. Residues 511–525 (SLEGLIEAYRTNAED) are Lumenal, vesicle-facing.

This sequence belongs to the amino acid/polyamine transporter 2 family.

It is found in the cytoplasmic vesicle membrane. The protein localises to the presynapse. The catalysed reaction is 4-aminobutanoate(out) + n H(+)(in) = 4-aminobutanoate(in) + n H(+)(out). It catalyses the reaction glycine(out) + n H(+)(in) = glycine(in) + n H(+)(out). The enzyme catalyses beta-alanine(out) + n H(+)(in) = beta-alanine(in) + n H(+)(out). Antiporter that exchanges vesicular protons for cytosolic 4-aminobutanoate or to a lesser extend glycine, thus allowing their secretion from nerve terminals. The transport is equally dependent on the chemical and electrical components of the proton gradient. May also transport beta-alanine. Acidification of GABAergic synaptic vesicles is a prerequisite for 4-aminobutanoate uptake. This chain is Vesicular inhibitory amino acid transporter, found in Macaca fascicularis (Crab-eating macaque).